A 791-amino-acid chain; its full sequence is Pleckstrin homology domain-containing family H member 3 (791 aa).

The first 18 residues, 1-18 (MPLPGGLWWLLCCRRGFT), serve as a signal peptide directing secretion. Residues 29–41 (LSGDGDEDEDDET) are compositionally biased toward acidic residues. The segment at 29-71 (LSGDGDEDEDDETFELRSPSPAGGGRGSLDVTLTQPTRNGPIT) is disordered. Position 30 is a phosphoserine (Ser30). Over residues 59 to 71 (VTLTQPTRNGPIT) the composition is skewed to polar residues. The PH domain maps to 95–199 (DVIVKGWLYR…WGVALREVIA (105 aa)). In terms of domain architecture, MyTH4 spans 237–399 (HTSSALYAPL…PSLAEISALS (163 aa)). In terms of domain architecture, FERM spans 404–755 (LLCTVHCPGA…ANPSPERPCS (352 aa)). Residues 549 to 559 (PRGPLPLLDRL) show a composition bias toward low complexity. Disordered stretches follow at residues 549-580 (PRGPLPLLDRLMPPPAPPREQPSRPARRPPPS) and 593-623 (LAKRRAERARRIGTGRSTESTAQVGGGGGGS). The segment covering 594-605 (AKRRAERARRIG) has biased composition (basic residues). Arg636 is modified (omega-N-methylarginine). A disordered region spans residues 748 to 791 (PSPERPCSSSGPPSQDLSDTSPPSQHQVLEKPQGQSGCLRQLQD). Residues 754–791 (CSSSGPPSQDLSDTSPPSQHQVLEKPQGQSGCLRQLQD) show a composition bias toward polar residues.

The chain is Pleckstrin homology domain-containing family H member 3 (Plekhh3) from Rattus norvegicus (Rat).